The following is a 418-amino-acid chain: Geranylgeranyl pyrophosphate synthase (418 aa).

Residues 51–64 are compositionally biased toward polar residues; that stretch reads TSSTGIPTSLNATP. Residues 51 to 73 form a disordered region; it reads TSSTGIPTSLNATPTKPVLRPVP. Residues Lys143, Arg146, and His175 each coordinate isopentenyl diphosphate. Residues Asp182 and Asp186 each contribute to the Mg(2+) site. Residue Arg191 coordinates dimethylallyl diphosphate. An isopentenyl diphosphate-binding site is contributed by Arg192. Lys269, Thr270, Gln305, Lys322, and Lys332 together coordinate dimethylallyl diphosphate.

The protein belongs to the FPP/GGPP synthase family. Mg(2+) is required as a cofactor.

The protein localises to the cytoplasm. The catalysed reaction is isopentenyl diphosphate + dimethylallyl diphosphate = (2E)-geranyl diphosphate + diphosphate. It carries out the reaction isopentenyl diphosphate + (2E)-geranyl diphosphate = (2E,6E)-farnesyl diphosphate + diphosphate. It catalyses the reaction isopentenyl diphosphate + (2E,6E)-farnesyl diphosphate = (2E,6E,10E)-geranylgeranyl diphosphate + diphosphate. The protein operates within isoprenoid biosynthesis; farnesyl diphosphate biosynthesis; farnesyl diphosphate from geranyl diphosphate and isopentenyl diphosphate: step 1/1. It functions in the pathway isoprenoid biosynthesis; geranyl diphosphate biosynthesis; geranyl diphosphate from dimethylallyl diphosphate and isopentenyl diphosphate: step 1/1. Its pathway is isoprenoid biosynthesis; geranylgeranyl diphosphate biosynthesis; geranylgeranyl diphosphate from farnesyl diphosphate and isopentenyl diphosphate: step 1/1. In terms of biological role, catalyzes the trans-addition of the three molecules of IPP onto DMAPP to form geranylgeranyl pyrophosphate. This is Geranylgeranyl pyrophosphate synthase (GGS) from Fusarium fujikuroi (Bakanae and foot rot disease fungus).